Here is a 235-residue protein sequence, read N- to C-terminus: Phosphoribosylaminoimidazole-succinocarboxamide synthase (235 aa).

Belongs to the SAICAR synthetase family.

The enzyme catalyses 5-amino-1-(5-phospho-D-ribosyl)imidazole-4-carboxylate + L-aspartate + ATP = (2S)-2-[5-amino-1-(5-phospho-beta-D-ribosyl)imidazole-4-carboxamido]succinate + ADP + phosphate + 2 H(+). It functions in the pathway purine metabolism; IMP biosynthesis via de novo pathway; 5-amino-1-(5-phospho-D-ribosyl)imidazole-4-carboxamide from 5-amino-1-(5-phospho-D-ribosyl)imidazole-4-carboxylate: step 1/2. This Thermoanaerobacter pseudethanolicus (strain ATCC 33223 / 39E) (Clostridium thermohydrosulfuricum) protein is Phosphoribosylaminoimidazole-succinocarboxamide synthase.